A 437-amino-acid polypeptide reads, in one-letter code: tRNA-2-methylthio-N(6)-dimethylallyladenosine synthase (437 aa).

The MTTase N-terminal domain occupies 1-115 (MKVYIETMGC…ISQVIHKEKA (115 aa)). Residues C10, C46, C78, C148, C152, and C155 each contribute to the [4Fe-4S] cluster site. In terms of domain architecture, Radical SAM core spans 134 to 367 (KKAQIRSLLN…QNRHKEILEE (234 aa)). Positions 370–436 (KLEVGKTHVV…KGRLIATAKG (67 aa)) constitute a TRAM domain.

Belongs to the methylthiotransferase family. MiaB subfamily. As to quaternary structure, monomer. Requires [4Fe-4S] cluster as cofactor.

The protein localises to the cytoplasm. The catalysed reaction is N(6)-dimethylallyladenosine(37) in tRNA + (sulfur carrier)-SH + AH2 + 2 S-adenosyl-L-methionine = 2-methylsulfanyl-N(6)-dimethylallyladenosine(37) in tRNA + (sulfur carrier)-H + 5'-deoxyadenosine + L-methionine + A + S-adenosyl-L-homocysteine + 2 H(+). In terms of biological role, catalyzes the methylthiolation of N6-(dimethylallyl)adenosine (i(6)A), leading to the formation of 2-methylthio-N6-(dimethylallyl)adenosine (ms(2)i(6)A) at position 37 in tRNAs that read codons beginning with uridine. This is tRNA-2-methylthio-N(6)-dimethylallyladenosine synthase from Helicobacter pylori (strain Shi470).